A 333-amino-acid polypeptide reads, in one-letter code: Holliday junction branch migration complex subunit RuvB (333 aa).

Positions 1 to 181 (MARILDNDLL…FGINGHMEYY (181 aa)) are large ATPase domain (RuvB-L). Residues leucine 20, arginine 21, glycine 62, lysine 65, threonine 66, threonine 67, 128–130 (EDY), arginine 171, tyrosine 181, and arginine 218 contribute to the ATP site. A Mg(2+)-binding site is contributed by threonine 66. The presensor-1 beta-hairpin stretch occupies residues 130–148 (YYIDIMIGAGETSRSVHLD). The interval 182 to 252 (ELPDLTEIVE…IADQALTMLD (71 aa)) is small ATPAse domain (RuvB-S). The tract at residues 255–333 (HEGLDYVDQK…HMGYDYTRDN (79 aa)) is head domain (RuvB-H). Arginine 291, arginine 310, arginine 312, and arginine 315 together coordinate DNA.

Belongs to the RuvB family. In terms of assembly, homohexamer. Forms an RuvA(8)-RuvB(12)-Holliday junction (HJ) complex. HJ DNA is sandwiched between 2 RuvA tetramers; dsDNA enters through RuvA and exits via RuvB. Only 4 subunits contact one DNA strand at any time. Two adjacent subunits are contacted by domain III of RuvA. An RuvB hexamer assembles on each DNA strand where it exits the tetramer. Each RuvB hexamer is contacted by two RuvA subunits (via domain III) on 2 adjacent RuvB subunits; this complex drives branch migration. In the full resolvosome a probable DNA-RuvA(4)-RuvB(12)-RuvC(2) complex forms which resolves the HJ.

It is found in the cytoplasm. The enzyme catalyses ATP + H2O = ADP + phosphate + H(+). Binding of domain III of RuvA to a single subunit of the RuvB hexamer activates the ATPase 2 subunits away and nucleotide exchange in the adjacent subunit. The RuvA-RuvB-RuvC complex processes Holliday junction (HJ) DNA during genetic recombination and DNA repair, while the RuvA-RuvB complex plays an important role in the rescue of blocked DNA replication forks via replication fork reversal (RFR). Catalyzes branch migration on Holliday junction (HJ) DNA in complex with RuvA from S.typhimurim and ATP. RuvA specifically binds to HJ cruciform DNA, conferring on it an open structure. The RuvB hexamer acts as an ATP-dependent pump, pulling dsDNA into and through the RuvAB complex. Forms 2 homohexamers on either side of HJ DNA bound by 1 or 2 RuvA tetramers; 4 subunits per hexamer contact DNA at a time. Coordinated motions by a converter formed by DNA-disengaged RuvB subunits stimulates ATP hydrolysis and nucleotide exchange. Immobilization of the converter enables RuvB to convert the ATP-contained energy into a lever motion, pulling 2 nucleotides of DNA out of the RuvA tetramer per ATP hydrolyzed, thus driving DNA branch migration. The RuvB motors rotate together with the DNA substrate, which together with the progressing nucleotide cycle forms the mechanistic basis for DNA recombination by continuous branch migration. Branch migration allows RuvC to scan DNA until it finds its consensus sequence, where it cleaves and resolves cruciform DNA. This Streptococcus thermophilus (strain ATCC BAA-250 / LMG 18311) protein is Holliday junction branch migration complex subunit RuvB.